A 415-amino-acid polypeptide reads, in one-letter code: Serine hydroxymethyltransferase (415 aa).

(6S)-5,6,7,8-tetrahydrofolate is bound by residues leucine 121 and 125–127 (GHL). Lysine 230 bears the N6-(pyridoxal phosphate)lysine mark. 355–357 (SPF) provides a ligand contact to (6S)-5,6,7,8-tetrahydrofolate.

This sequence belongs to the SHMT family. In terms of assembly, homodimer. Pyridoxal 5'-phosphate is required as a cofactor.

Its subcellular location is the cytoplasm. The catalysed reaction is (6R)-5,10-methylene-5,6,7,8-tetrahydrofolate + glycine + H2O = (6S)-5,6,7,8-tetrahydrofolate + L-serine. It participates in one-carbon metabolism; tetrahydrofolate interconversion. The protein operates within amino-acid biosynthesis; glycine biosynthesis; glycine from L-serine: step 1/1. In terms of biological role, catalyzes the reversible interconversion of serine and glycine with tetrahydrofolate (THF) serving as the one-carbon carrier. This reaction serves as the major source of one-carbon groups required for the biosynthesis of purines, thymidylate, methionine, and other important biomolecules. Also exhibits THF-independent aldolase activity toward beta-hydroxyamino acids, producing glycine and aldehydes, via a retro-aldol mechanism. This is Serine hydroxymethyltransferase from Lactococcus lactis subsp. lactis (strain IL1403) (Streptococcus lactis).